The following is a 108-amino-acid chain: Thiosulfate sulfurtransferase GlpE (108 aa).

The Rhodanese domain occupies 18-106 (QNEDAVLVDI…WVRSELPIEL (89 aa)). C66 (cysteine persulfide intermediate) is an active-site residue.

This sequence belongs to the GlpE family.

It localises to the cytoplasm. It catalyses the reaction thiosulfate + hydrogen cyanide = thiocyanate + sulfite + 2 H(+). It carries out the reaction thiosulfate + [thioredoxin]-dithiol = [thioredoxin]-disulfide + hydrogen sulfide + sulfite + 2 H(+). Transferase that catalyzes the transfer of sulfur from thiosulfate to thiophilic acceptors such as cyanide or dithiols. May function in a CysM-independent thiosulfate assimilation pathway by catalyzing the conversion of thiosulfate to sulfite, which can then be used for L-cysteine biosynthesis. In Glaesserella parasuis serovar 5 (strain SH0165) (Haemophilus parasuis), this protein is Thiosulfate sulfurtransferase GlpE.